A 501-amino-acid polypeptide reads, in one-letter code: Ribose import ATP-binding protein RbsA (501 aa).

ABC transporter domains follow at residues 6–242 and 253–495; these read LQLS…VGRK and KHGE…VGKK. ATP is bound at residue 38–45; sequence GENGAGKS.

Belongs to the ABC transporter superfamily. Ribose importer (TC 3.A.1.2.1) family. The complex is composed of an ATP-binding protein (RbsA), two transmembrane proteins (RbsC) and a solute-binding protein (RbsB).

It localises to the cell inner membrane. The enzyme catalyses D-ribose(out) + ATP + H2O = D-ribose(in) + ADP + phosphate + H(+). Its function is as follows. Part of the ABC transporter complex RbsABC involved in ribose import. Responsible for energy coupling to the transport system. In Vibrio parahaemolyticus serotype O3:K6 (strain RIMD 2210633), this protein is Ribose import ATP-binding protein RbsA.